Consider the following 462-residue polypeptide: NADH-quinone oxidoreductase subunit N 1 (462 aa).

Helical transmembrane passes span 4–24 (FVVA…VLCL), 32–52 (AGFY…WAVA), 60–80 (IACF…ALLA), 88–108 (FAGD…LLLA), 113–133 (WIML…LIAA), 148–168 (FLPG…IYAA), 178–198 (LAAP…GVGF), 220–240 (VAAF…LHVC), 251–271 (LWPA…LGAV), 279–299 (LLAY…MAVN), 307–327 (LFYL…VGAL), 351–371 (AGVL…AGFV), 374–394 (FLVF…FGII), 416–436 (LIAH…ALGV), and 439–459 (AGLV…AALF).

Belongs to the complex I subunit 2 family. As to quaternary structure, NDH-1 is composed of 14 different subunits. Subunits NuoA, H, J, K, L, M, N constitute the membrane sector of the complex.

The protein localises to the cell inner membrane. It carries out the reaction a quinone + NADH + 5 H(+)(in) = a quinol + NAD(+) + 4 H(+)(out). NDH-1 shuttles electrons from NADH, via FMN and iron-sulfur (Fe-S) centers, to quinones in the respiratory chain. The immediate electron acceptor for the enzyme in this species is believed to be ubiquinone. Couples the redox reaction to proton translocation (for every two electrons transferred, four hydrogen ions are translocated across the cytoplasmic membrane), and thus conserves the redox energy in a proton gradient. The chain is NADH-quinone oxidoreductase subunit N 1 from Solidesulfovibrio magneticus (strain ATCC 700980 / DSM 13731 / RS-1) (Desulfovibrio magneticus).